The sequence spans 238 residues: Ribosomal RNA small subunit methyltransferase G (238 aa).

S-adenosyl-L-methionine-binding positions include Gly77, Phe82, 128 to 129, and Arg147; that span reads AE.

Belongs to the methyltransferase superfamily. RNA methyltransferase RsmG family.

The protein localises to the cytoplasm. Its function is as follows. Specifically methylates the N7 position of guanine in position 535 of 16S rRNA. The polypeptide is Ribosomal RNA small subunit methyltransferase G (Exiguobacterium sp. (strain ATCC BAA-1283 / AT1b)).